The chain runs to 470 residues: Na(+)-translocating NADH-quinone reductase subunit A (470 aa).

This sequence belongs to the NqrA family. As to quaternary structure, composed of six subunits; NqrA, NqrB, NqrC, NqrD, NqrE and NqrF.

It catalyses the reaction a ubiquinone + n Na(+)(in) + NADH + H(+) = a ubiquinol + n Na(+)(out) + NAD(+). NQR complex catalyzes the reduction of ubiquinone-1 to ubiquinol by two successive reactions, coupled with the transport of Na(+) ions from the cytoplasm to the periplasm. NqrA to NqrE are probably involved in the second step, the conversion of ubisemiquinone to ubiquinol. The polypeptide is Na(+)-translocating NADH-quinone reductase subunit A (Chlamydia caviae (strain ATCC VR-813 / DSM 19441 / 03DC25 / GPIC) (Chlamydophila caviae)).